The sequence spans 135 residues: Large ribosomal subunit protein uL16c (135 aa).

This sequence belongs to the universal ribosomal protein uL16 family. As to quaternary structure, part of the 50S ribosomal subunit.

It localises to the plastid. The protein localises to the chloroplast. This chain is Large ribosomal subunit protein uL16c, found in Vitis vinifera (Grape).